The primary structure comprises 977 residues: GAS2-like protein pickled eggs (977 aa).

Positions 20–159 (EAMREDLAEW…CLLEVARRGA (140 aa)) constitute a Calponin-homology (CH) domain. Residues 218-245 (VETDLYDDSDDSETEDDGDQNPVLMYGP) form a disordered region. Positions 221 to 236 (DLYDDSDDSETEDDGD) are enriched in acidic residues. The 73-residue stretch at 252-324 (NDLKSLDEMV…HYLDKHDPCR (73 aa)) folds into the GAR domain. Disordered stretches follow at residues 397–543 (PTLQ…SEIS), 557–624 (AQKR…VCDG), 666–685 (VANTMGNPTPNLSKIPRSPL), 693–803 (IDNS…KGRS), and 910–977 (NLER…TELY). Polar residues-rich tracts occupy residues 399-428 (LQNGHSLSPNSGKYRSRSPTPQRKFLNQQA) and 436-454 (ATGSSQTVTTDTSSGQLLG). A compositionally biased stretch (gly residues) spans 502-527 (GGSGVGSAAGGVSSGSAGSGVAGEQG). The span at 577–589 (RLDQTSSDSQISP) shows a compositional bias: polar residues. Positions 601–620 (ILEEEDLNGQDREEDQEDYS) are enriched in acidic residues. 2 stretches are compositionally biased toward polar residues: residues 666-677 (VANTMGNPTPNL) and 731-741 (TRNSTGATTTP). The span at 928-953 (SSAASSCESNNSNAGAGSGAAAGSAS) shows a compositional bias: low complexity.

The protein belongs to the GAS2 family. As to expression, expressed in the ovary and the ring canals of the germline cells. In larvae, expressed in the notal region of the wing disk.

Its subcellular location is the cytoplasm. The protein localises to the cytoskeleton. It localises to the cell cortex. Its function is as follows. Essential for development and viability. Required for ovary development and oogenesis, and is essential for the development of the indirect flight muscles. May act as a negative regulator of the Notch signaling pathway in certain tissues, such as the muscle precursors and ovaries. May function as a linker protein between the actin and microtubule cytoskeletons. The protein is GAS2-like protein pickled eggs of Drosophila melanogaster (Fruit fly).